The following is a 312-amino-acid chain: Aspartate carbamoyltransferase catalytic subunit (312 aa).

Residues R58 and T59 each contribute to the carbamoyl phosphate site. Residue K86 participates in L-aspartate binding. 3 residues coordinate carbamoyl phosphate: R108, H136, and Q139. Residues R169 and R223 each contribute to the L-aspartate site. Carbamoyl phosphate-binding residues include G264 and P265.

This sequence belongs to the aspartate/ornithine carbamoyltransferase superfamily. ATCase family. As to quaternary structure, heterododecamer (2C3:3R2) of six catalytic PyrB chains organized as two trimers (C3), and six regulatory PyrI chains organized as three dimers (R2).

The catalysed reaction is carbamoyl phosphate + L-aspartate = N-carbamoyl-L-aspartate + phosphate + H(+). Its pathway is pyrimidine metabolism; UMP biosynthesis via de novo pathway; (S)-dihydroorotate from bicarbonate: step 2/3. Functionally, catalyzes the condensation of carbamoyl phosphate and aspartate to form carbamoyl aspartate and inorganic phosphate, the committed step in the de novo pyrimidine nucleotide biosynthesis pathway. The polypeptide is Aspartate carbamoyltransferase catalytic subunit (Desulfitobacterium hafniense (strain DSM 10664 / DCB-2)).